The primary structure comprises 752 residues: Pentatricopeptide repeat-containing protein At5g13270, chloroplastic (752 aa).

The N-terminal 80 residues, 1-80 (MTILTVQSSF…LQEMDKAGVS (80 aa)), are a transit peptide targeting the chloroplast. 15 PPR repeats span residues 47 to 81 (QGQV…GVSV), 82 to 116 (SSYS…IENP), 117 to 147 (SVLL…MSEL), 148 to 182 (NAVS…GDKP), 183 to 217 (PSSM…GLCS), 218 to 248 (NTSI…MAVK), 249 to 283 (KPVA…GVEW), 284 to 318 (DSFV…GLES), 319 to 349 (EVSV…IREP), 350 to 384 (NDVS…NASI), 386 to 420 (NSFT…SLIG), 421 to 451 (SQYG…MDNP), 452 to 486 (DIVA…GMKP), 487 to 522 (NSVT…NVAP), and 523 to 553 (TIDH…MPFE). Positions 558–633 (SWKCFLSGCW…ELSCSWIQEK (76 aa)) are type E motif. The segment at 634-664 (GKIHRFIVGDKHHPQTQEIYEKLKEFDGFME) is type E(+) motif. Residues 665–752 (GDMFQCNMTE…EGKCSCNDYW (88 aa)) form a type DYW motif region.

The protein belongs to the PPR family. PCMP-H subfamily.

It localises to the plastid. Its subcellular location is the chloroplast. In Arabidopsis thaliana (Mouse-ear cress), this protein is Pentatricopeptide repeat-containing protein At5g13270, chloroplastic (PCMP-H90).